The primary structure comprises 367 residues: Alanine racemase (367 aa).

Lys-40 functions as the Proton acceptor; specific for D-alanine in the catalytic mechanism. Lys-40 carries the N6-(pyridoxal phosphate)lysine modification. Arg-136 lines the substrate pocket. The Proton acceptor; specific for L-alanine role is filled by Tyr-263. Residue Met-310 participates in substrate binding.

The protein belongs to the alanine racemase family. Pyridoxal 5'-phosphate is required as a cofactor.

It catalyses the reaction L-alanine = D-alanine. Its pathway is amino-acid biosynthesis; D-alanine biosynthesis; D-alanine from L-alanine: step 1/1. Catalyzes the interconversion of L-alanine and D-alanine. May also act on other amino acids. This is Alanine racemase (alr) from Streptococcus thermophilus (strain ATCC BAA-250 / LMG 18311).